The chain runs to 578 residues: Tetratricopeptide repeat protein 39A (578 aa).

TPR repeat units follow at residues 280-313 (AIFL…QQHW), 470-503 (CLVK…EKKI), and 511-544 (PNAL…YKNY).

It belongs to the TTC39 family.

The sequence is that of Tetratricopeptide repeat protein 39A (Ttc39a) from Mus musculus (Mouse).